The sequence spans 431 residues: UDP-N-acetylglucosamine 1-carboxyvinyltransferase (431 aa).

Residue 22–23 participates in phosphoenolpyruvate binding; the sequence is KN. Arg-102 contributes to the UDP-N-acetyl-alpha-D-glucosamine binding site. The Proton donor role is filled by Cys-126. Cys-126 is modified (2-(S-cysteinyl)pyruvic acid O-phosphothioketal). Positions 318 and 340 each coordinate UDP-N-acetyl-alpha-D-glucosamine.

This sequence belongs to the EPSP synthase family. MurA subfamily.

The protein resides in the cytoplasm. It carries out the reaction phosphoenolpyruvate + UDP-N-acetyl-alpha-D-glucosamine = UDP-N-acetyl-3-O-(1-carboxyvinyl)-alpha-D-glucosamine + phosphate. Its pathway is cell wall biogenesis; peptidoglycan biosynthesis. Its function is as follows. Cell wall formation. Adds enolpyruvyl to UDP-N-acetylglucosamine. The polypeptide is UDP-N-acetylglucosamine 1-carboxyvinyltransferase (Bartonella henselae (strain ATCC 49882 / DSM 28221 / CCUG 30454 / Houston 1) (Rochalimaea henselae)).